The sequence spans 334 residues: Methylthioribose-1-phosphate isomerase (334 aa).

Residues 44–46 (RGA), arginine 87, and glutamine 192 each bind substrate. Aspartate 233 acts as the Proton donor in catalysis. 243–244 (NK) contacts substrate.

The protein belongs to the eIF-2B alpha/beta/delta subunits family. MtnA subfamily.

It carries out the reaction 5-(methylsulfanyl)-alpha-D-ribose 1-phosphate = 5-(methylsulfanyl)-D-ribulose 1-phosphate. Its pathway is amino-acid biosynthesis; L-methionine biosynthesis via salvage pathway; L-methionine from S-methyl-5-thio-alpha-D-ribose 1-phosphate: step 1/6. In terms of biological role, catalyzes the interconversion of methylthioribose-1-phosphate (MTR-1-P) into methylthioribulose-1-phosphate (MTRu-1-P). This chain is Methylthioribose-1-phosphate isomerase, found in Dehalococcoides mccartyi (strain ATCC BAA-2266 / KCTC 15142 / 195) (Dehalococcoides ethenogenes (strain 195)).